Here is a 1252-residue protein sequence, read N- to C-terminus: HEAT repeat-containing protein 6 (1252 aa).

The HEAT 1 repeat unit spans residues 230–269 (PDLLGKSGLLMKLSDVTHSDPEVRRAAVHCMANLCLSVPG). Residues 365 to 417 (DGRSPVKPQQPESSAARPSANKKKKYKVKPKKTQQGEKAEEEEPYGEVDAAPG) are disordered. Residues 384–396 (ANKKKKYKVKPKK) are compositionally biased toward basic residues. Residues Ser471 and Ser474 each carry the phosphoserine modification. 3 HEAT repeats span residues 524–562 (ELGS…GSKQ), 586–624 (SSIR…NAPY), and 630–667 (SLLT…THAP). The residue at position 689 (Thr689) is a Phosphothreonine. Position 714 is a phosphoserine (Ser714).

The protein is HEAT repeat-containing protein 6 (Heatr6) of Rattus norvegicus (Rat).